Here is a 210-residue protein sequence, read N- to C-terminus: N-(5'-phosphoribosyl)anthranilate isomerase (210 aa).

The protein belongs to the TrpF family.

It catalyses the reaction N-(5-phospho-beta-D-ribosyl)anthranilate = 1-(2-carboxyphenylamino)-1-deoxy-D-ribulose 5-phosphate. It participates in amino-acid biosynthesis; L-tryptophan biosynthesis; L-tryptophan from chorismate: step 3/5. The sequence is that of N-(5'-phosphoribosyl)anthranilate isomerase from Pseudomonas fluorescens (strain SBW25).